The chain runs to 359 residues: N-acetyl-gamma-glutamyl-phosphate reductase (359 aa).

Cys-162 is an active-site residue.

Belongs to the NAGSA dehydrogenase family. Type 1 subfamily.

The protein resides in the cytoplasm. It carries out the reaction N-acetyl-L-glutamate 5-semialdehyde + phosphate + NADP(+) = N-acetyl-L-glutamyl 5-phosphate + NADPH + H(+). The protein operates within amino-acid biosynthesis; L-arginine biosynthesis; N(2)-acetyl-L-ornithine from L-glutamate: step 3/4. Catalyzes the NADPH-dependent reduction of N-acetyl-5-glutamyl phosphate to yield N-acetyl-L-glutamate 5-semialdehyde. The polypeptide is N-acetyl-gamma-glutamyl-phosphate reductase (Prochlorococcus marinus (strain SARG / CCMP1375 / SS120)).